Consider the following 293-residue polypeptide: Ribonuclease Z (293 aa).

Zn(2+) contacts are provided by His60, His62, Asp64, His65, His132, Asp200, and His256. Asp64 functions as the Proton acceptor in the catalytic mechanism.

The protein belongs to the RNase Z family. As to quaternary structure, homodimer. The cofactor is Zn(2+).

The enzyme catalyses Endonucleolytic cleavage of RNA, removing extra 3' nucleotides from tRNA precursor, generating 3' termini of tRNAs. A 3'-hydroxy group is left at the tRNA terminus and a 5'-phosphoryl group is left at the trailer molecule.. Its function is as follows. Zinc phosphodiesterase, which displays some tRNA 3'-processing endonuclease activity. Probably involved in tRNA maturation, by removing a 3'-trailer from precursor tRNA. The polypeptide is Ribonuclease Z (Sulfurisphaera tokodaii (strain DSM 16993 / JCM 10545 / NBRC 100140 / 7) (Sulfolobus tokodaii)).